A 346-amino-acid polypeptide reads, in one-letter code: NADH-ubiquinone oxidoreductase chain 2 (346 aa).

11 consecutive transmembrane segments (helical) span residues 1-21 (MNPHATPVLVLSLALGTTITI), 25-45 (HWVLAWTGLEINTLAIIPLIS), 60-80 (FLTQAAASALVLFSSMTNAWA), 95-115 (CLLLTAAIAIKLGLVPFHFWF), 124-144 (LMTALLLSTLMKFPPLTLLLM), 149-169 (LNPALLTTMALASAALGGWMG), 178-195 (ILAFSSISHLGWIAIILV), 200-219 (LALLTFYLYAIMTSAVFMAL), 242-262 (ATLMLVLLSLAGLPPLTGFMP), 274-294 (EMTPAAMAIAMLSLLSLFFYL), and 326-346 (AILASLSILLLPLSPMIHAIV).

Belongs to the complex I subunit 2 family.

Its subcellular location is the mitochondrion inner membrane. It catalyses the reaction a ubiquinone + NADH + 5 H(+)(in) = a ubiquinol + NAD(+) + 4 H(+)(out). Functionally, core subunit of the mitochondrial membrane respiratory chain NADH dehydrogenase (Complex I) that is believed to belong to the minimal assembly required for catalysis. Complex I functions in the transfer of electrons from NADH to the respiratory chain. The immediate electron acceptor for the enzyme is believed to be ubiquinone. The polypeptide is NADH-ubiquinone oxidoreductase chain 2 (MT-ND2) (Mareca falcata (Falcated duck)).